The sequence spans 175 residues: Pituitary adenylate cyclase-activating polypeptide (175 aa).

A signal peptide spans 1-24; sequence MTMCSGARLALLVYGIIMHNSVSC. Positions 25–78 are excised as a propeptide; it reads SPAAGLSFPGIRPEEEAYDQDGNPLQDFYDWDPPGAGSPASALRDAYALYYPAD. Residues 149 to 157 form an important for receptor binding region; that stretch reads VKKYLAAVL. The residue at position 157 (L157) is a Leucine amide. A Lysine amide modification is found at K168. Positions 172-175 are excised as a propeptide; sequence IAYL.

Belongs to the glucagon family.

The protein localises to the secreted. Its function is as follows. PACAP is a neuropeptide involved in diverse array of physiological processes through activating the PACAP subfamily of class B1 G protein-coupled receptors: VIP receptor 1 (VIPR1), VIP receptor 2 (VIPR2), and PACAP type I receptor (ADCYAP1R1). Exerts neuroprotective and general cytoprotective effects due to anti-apoptotic, anti-inflammatory, and antioxidant actions. Promotes neuron projection development through the RAPGEF2/Rap1/B-Raf/ERK pathway. In chromaffin cells, induces long-lasting increase of intracellular calcium concentrations and neuroendocrine secretion. Involved in the control of glucose homeostasis, induces insulin secretion by pancreatic beta cells. PACAP exists in two bioactive forms from proteolysis of the same precursor protein, PACAP27 and PACAP38, which differ by eleven amino acid residues in the C-terminus. The protein is Pituitary adenylate cyclase-activating polypeptide (Adcyap1) of Rattus norvegicus (Rat).